The primary structure comprises 431 residues: Urokinase-type plasminogen activator (431 aa).

Positions 1–20 are cleaved as a signal peptide; that stretch reads MRALLARLLLCVLVVSDSKG. Residues 27–63 enclose the EGF-like domain; it reads VPSNCDCLNGGTCVSNKYFSNIHWCNCPKKFGGQHCE. Disulfide bonds link C31–C39, C33–C51, C53–C62, C70–C151, C91–C133, and C122–C146. The tract at residues 34–57 is binds urokinase plasminogen activator surface receptor; that stretch reads LNGGTCVSNKYFSNIHWCNCPKKF. The region spanning 69-151 is the Kringle domain; it reads TCYEGNGHFY…LVQECMVHDC (83 aa). Residues 152–178 form a connecting peptide region; it reads ADGKKPSSPPEELKFQCGQKTLRPRFK. S158 is subject to Phosphoserine. 6 disulfides stabilise this stretch: C168–C299, C209–C225, C217–C288, C313–C382, C345–C361, and C372–C400. In terms of domain architecture, Peptidase S1 spans 179 to 424; the sequence is IVGGEFTTIE…FLPWIRSHTK (246 aa). Active-site charge relay system residues include H224 and D275. An N-linked (GlcNAc...) asparagine glycan is attached at N322. Phosphoserine is present on S323. Catalysis depends on S376, which acts as the Charge relay system.

It belongs to the peptidase S1 family. As to quaternary structure, found in high and low molecular mass forms. Each consists of two chains, A and B. The high molecular mass form contains a long chain A which is cleaved to yield a short chain A. Forms heterodimer with SERPINA5. Binds LRP1B; binding is followed by internalization and degradation. Interacts with MRC2. Interacts with PLAUR. In complex with SERPINE1, interacts with PLAUR/uPAR. Interacts with SORL1 and LRP1, either alone or in complex with SERPINE1; these interactions are abolished in the presence of LRPAP1/RAP. The ternary complex composed of PLAUR-PLAU-PAI1 also interacts with SORLA. In terms of processing, phosphorylation of Ser-158 and Ser-323 abolishes proadhesive ability but does not interfere with receptor binding. Post-translationally, produced as an inactive single-chain protein (pro-uPA or sc-uPA), is processed into the active disulfide-linked two-chain form of PLAU/uPA by a proteolytic event mediated, at least, by TMPRSS4.

The protein localises to the secreted. It carries out the reaction Specific cleavage of Arg-|-Val bond in plasminogen to form plasmin.. With respect to regulation, inhibited by SERPINA5. Inhibited by SERPINE1. Specifically cleaves the zymogen plasminogen to form the active enzyme plasmin. The polypeptide is Urokinase-type plasminogen activator (PLAU) (Pongo abelii (Sumatran orangutan)).